The primary structure comprises 291 residues: 4-diphosphocytidyl-2-C-methyl-D-erythritol kinase (291 aa).

The active site involves lysine 8. 89–99 lines the ATP pocket; it reads PIGAGVGGGSS. Aspartate 131 is an active-site residue.

Belongs to the GHMP kinase family. IspE subfamily.

The catalysed reaction is 4-CDP-2-C-methyl-D-erythritol + ATP = 4-CDP-2-C-methyl-D-erythritol 2-phosphate + ADP + H(+). It participates in isoprenoid biosynthesis; isopentenyl diphosphate biosynthesis via DXP pathway; isopentenyl diphosphate from 1-deoxy-D-xylulose 5-phosphate: step 3/6. Catalyzes the phosphorylation of the position 2 hydroxy group of 4-diphosphocytidyl-2C-methyl-D-erythritol. This chain is 4-diphosphocytidyl-2-C-methyl-D-erythritol kinase, found in Chlamydia caviae (strain ATCC VR-813 / DSM 19441 / 03DC25 / GPIC) (Chlamydophila caviae).